Here is a 492-residue protein sequence, read N- to C-terminus: Catalase isozyme 1 (492 aa).

Active-site residues include H65 and N138. Y348 lines the heme pocket.

It belongs to the catalase family. As to quaternary structure, homotetramer. Heme is required as a cofactor.

Its subcellular location is the peroxisome. The enzyme catalyses 2 H2O2 = O2 + 2 H2O. Functionally, occurs in almost all aerobically respiring organisms and serves to protect cells from the toxic effects of hydrogen peroxide. This Gossypium hirsutum (Upland cotton) protein is Catalase isozyme 1 (CAT1).